Reading from the N-terminus, the 1148-residue chain is Maintenance of telomere capping protein 5 (1148 aa).

WD repeat units lie at residues 63–106 (HHIT…SNAI), 112–152 (GHSR…RPFY), 156–195 (SWRS…TPLC), 199–239 (GHVS…TESK), and 299–348 (GHSD…YGKV). The RWD domain occupies 432–543 (EEVSAIGHKF…RFVLGEKVSL (112 aa)). Phosphoserine is present on Ser-759. Residues 963–990 (THNTLNGSSKFTEPAQKQGSRAISSSPF) are disordered. A compositionally biased stretch (polar residues) spans 964-990 (HNTLNGSSKFTEPAQKQGSRAISSSPF).

It belongs to the WD repeat WDR59 family. In terms of assembly, component of the SEA complex composed of at least IML1/SEA1, RTC1/SEA2, MTC5/SEA3, NPR2, NPR3, SEA4, SEC13 and SEH1.

The protein resides in the vacuole membrane. Its function is as follows. Component of the SEA complex which coats the vacuolar membrane and is involved in intracellular trafficking, autophagy, response to nitrogen starvation, and amino acid biogenesis. May be involved in telomere capping. This chain is Maintenance of telomere capping protein 5 (MTC5), found in Saccharomyces cerevisiae (strain ATCC 204508 / S288c) (Baker's yeast).